Reading from the N-terminus, the 272-residue chain is tRNA pseudouridine synthase A (272 aa).

Aspartate 51 (nucleophile) is an active-site residue. Position 109 (tyrosine 109) interacts with substrate.

The protein belongs to the tRNA pseudouridine synthase TruA family. In terms of assembly, homodimer.

It catalyses the reaction uridine(38/39/40) in tRNA = pseudouridine(38/39/40) in tRNA. In terms of biological role, formation of pseudouridine at positions 38, 39 and 40 in the anticodon stem and loop of transfer RNAs. The sequence is that of tRNA pseudouridine synthase A from Verminephrobacter eiseniae (strain EF01-2).